Here is a 466-residue protein sequence, read N- to C-terminus: Soluble pyridine nucleotide transhydrogenase (466 aa).

Position 36–45 (36–45 (ERYQNVGGGC)) interacts with FAD.

It belongs to the class-I pyridine nucleotide-disulfide oxidoreductase family. It depends on FAD as a cofactor.

The protein localises to the cytoplasm. It carries out the reaction NAD(+) + NADPH = NADH + NADP(+). In terms of biological role, conversion of NADPH, generated by peripheral catabolic pathways, to NADH, which can enter the respiratory chain for energy generation. This Shigella boydii serotype 18 (strain CDC 3083-94 / BS512) protein is Soluble pyridine nucleotide transhydrogenase.